A 732-amino-acid chain; its full sequence is Subtilisin-like protease SBT4.13 (732 aa).

An N-terminal signal peptide occupies residues 1–24 (MATLAASSSLLSCLLVLFLSSVSA). Residues 25 to 109 (VTDDKQVYIV…VFPNKKLQLQ (85 aa)) constitute a propeptide, activation peptide. One can recognise an Inhibitor I9 domain in the interval 31-108 (VYIVYMGSLS…SVFPNKKLQL (78 aa)). One can recognise a Peptidase S8 domain in the interval 113–579 (SWDFMGLKEG…SGHVDPIAAS (467 aa)). Asp141 (charge relay system) is an active-site residue. N-linked (GlcNAc...) asparagine glycosylation is present at Asn172. The Charge relay system role is filled by His196. An N-linked (GlcNAc...) asparagine glycan is attached at Asn219. The 85-residue stretch at 352–436 (DYPLVYGKSA…GLLTEDFESL (85 aa)) folds into the PA domain. Asn458 carries an N-linked (GlcNAc...) asparagine glycan. Catalysis depends on Ser518, which acts as the Charge relay system. 4 N-linked (GlcNAc...) asparagine glycosylation sites follow: Asn555, Asn600, Asn648, and Asn658.

The protein belongs to the peptidase S8 family. In terms of processing, the C-terminal propeptide is autocleaved.

The protein localises to the secreted. The protein is Subtilisin-like protease SBT4.13 of Arabidopsis thaliana (Mouse-ear cress).